Reading from the N-terminus, the 72-residue chain is Translation initiation factor IF-1 (72 aa).

Positions 1-72 (MAKDDVIEIE…TKGRITYRFK (72 aa)) constitute an S1-like domain.

Belongs to the IF-1 family. In terms of assembly, component of the 30S ribosomal translation pre-initiation complex which assembles on the 30S ribosome in the order IF-2 and IF-3, IF-1 and N-formylmethionyl-tRNA(fMet); mRNA recruitment can occur at any time during PIC assembly.

The protein resides in the cytoplasm. Its function is as follows. One of the essential components for the initiation of protein synthesis. Stabilizes the binding of IF-2 and IF-3 on the 30S subunit to which N-formylmethionyl-tRNA(fMet) subsequently binds. Helps modulate mRNA selection, yielding the 30S pre-initiation complex (PIC). Upon addition of the 50S ribosomal subunit IF-1, IF-2 and IF-3 are released leaving the mature 70S translation initiation complex. This chain is Translation initiation factor IF-1, found in Ligilactobacillus salivarius (strain UCC118) (Lactobacillus salivarius).